The following is a 267-amino-acid chain: tRNA pseudouridine synthase A (267 aa).

Catalysis depends on Asp-55, which acts as the Nucleophile. Tyr-109 is a substrate binding site.

The protein belongs to the tRNA pseudouridine synthase TruA family.

The catalysed reaction is uridine(38/39/40) in tRNA = pseudouridine(38/39/40) in tRNA. Formation of pseudouridine at positions 38, 39 and 40 in the anticodon stem and loop of transfer RNAs. In Natronomonas pharaonis (strain ATCC 35678 / DSM 2160 / CIP 103997 / JCM 8858 / NBRC 14720 / NCIMB 2260 / Gabara) (Halobacterium pharaonis), this protein is tRNA pseudouridine synthase A.